A 54-amino-acid polypeptide reads, in one-letter code: Relaxin (54 aa).

The residue at position 1 (Gln-1) is a Pyrrolidone carboxylic acid. 3 disulfide bridges follow: Cys-10-Cys-41, Cys-22-Cys-54, and Cys-40-Cys-45.

The protein belongs to the insulin family. As to quaternary structure, heterodimer of a B chain and an A chain linked by two disulfide bonds.

Its subcellular location is the secreted. Its function is as follows. Relaxin is an ovarian hormone that acts with estrogen to produce dilatation of the birth canal in many mammals. The polypeptide is Relaxin (Balaenoptera acutorostrata (Common minke whale)).